A 326-amino-acid chain; its full sequence is Tetraacyldisaccharide 4'-kinase (326 aa).

55 to 62 is a binding site for ATP; the sequence is TAGGNGKT.

Belongs to the LpxK family.

It carries out the reaction a lipid A disaccharide + ATP = a lipid IVA + ADP + H(+). The protein operates within glycolipid biosynthesis; lipid IV(A) biosynthesis; lipid IV(A) from (3R)-3-hydroxytetradecanoyl-[acyl-carrier-protein] and UDP-N-acetyl-alpha-D-glucosamine: step 6/6. Functionally, transfers the gamma-phosphate of ATP to the 4'-position of a tetraacyldisaccharide 1-phosphate intermediate (termed DS-1-P) to form tetraacyldisaccharide 1,4'-bis-phosphate (lipid IVA). This Klebsiella pneumoniae subsp. pneumoniae (strain ATCC 700721 / MGH 78578) protein is Tetraacyldisaccharide 4'-kinase.